A 246-amino-acid chain; its full sequence is MPQVSMRDMLSAGVHFGHQTRYWNPKMGKYIFGARNKIHIINLEHTVPAFNEALNLITQMAAQKKKILFVGTKRAAQKTIKEQAERAGQPFVSHRWLGGMLTNYKTIRASIRRLSDLTTQSQDGTFAKLTKKEALMRSRDMEKLERSIGGIKGMGGLPDAMFVIDVEHERIAIQEANKLGIPVIGVVDTNSSPEGIDYVIPGNDDAIRAIKLYATAIADACLEGSKSSASVPNKDEYVAAEDGAAE.

The disordered stretch occupies residues 225-246; sequence SKSSASVPNKDEYVAAEDGAAE.

This sequence belongs to the universal ribosomal protein uS2 family.

This Cellvibrio japonicus (strain Ueda107) (Pseudomonas fluorescens subsp. cellulosa) protein is Small ribosomal subunit protein uS2.